The chain runs to 543 residues: Chaperonin GroEL (543 aa).

ATP-binding positions include 31-34, 88-92, glycine 415, 479-481, and aspartate 495; these read TMGP, DGTTT, and DAL.

This sequence belongs to the chaperonin (HSP60) family. In terms of assembly, forms a cylinder of 14 subunits composed of two heptameric rings stacked back-to-back. Interacts with the co-chaperonin GroES.

The protein localises to the cytoplasm. It catalyses the reaction ATP + H2O + a folded polypeptide = ADP + phosphate + an unfolded polypeptide.. In terms of biological role, together with its co-chaperonin GroES, plays an essential role in assisting protein folding. The GroEL-GroES system forms a nano-cage that allows encapsulation of the non-native substrate proteins and provides a physical environment optimized to promote and accelerate protein folding. The chain is Chaperonin GroEL from Clostridium tetani (strain Massachusetts / E88).